Consider the following 478-residue polypeptide: Protein nucleotidyltransferase YdiU (478 aa).

8 residues coordinate ATP: glycine 84, glycine 86, arginine 87, lysine 107, aspartate 119, glycine 120, arginine 170, and arginine 177. Aspartate 246 serves as the catalytic Proton acceptor. Mg(2+) contacts are provided by asparagine 247 and aspartate 256. Residue aspartate 256 coordinates ATP.

It belongs to the SELO family. Mg(2+) is required as a cofactor. Mn(2+) serves as cofactor.

It catalyses the reaction L-seryl-[protein] + ATP = 3-O-(5'-adenylyl)-L-seryl-[protein] + diphosphate. It carries out the reaction L-threonyl-[protein] + ATP = 3-O-(5'-adenylyl)-L-threonyl-[protein] + diphosphate. The catalysed reaction is L-tyrosyl-[protein] + ATP = O-(5'-adenylyl)-L-tyrosyl-[protein] + diphosphate. The enzyme catalyses L-histidyl-[protein] + UTP = N(tele)-(5'-uridylyl)-L-histidyl-[protein] + diphosphate. It catalyses the reaction L-seryl-[protein] + UTP = O-(5'-uridylyl)-L-seryl-[protein] + diphosphate. It carries out the reaction L-tyrosyl-[protein] + UTP = O-(5'-uridylyl)-L-tyrosyl-[protein] + diphosphate. In terms of biological role, nucleotidyltransferase involved in the post-translational modification of proteins. It can catalyze the addition of adenosine monophosphate (AMP) or uridine monophosphate (UMP) to a protein, resulting in modifications known as AMPylation and UMPylation. The sequence is that of Protein nucleotidyltransferase YdiU from Escherichia coli O81 (strain ED1a).